The chain runs to 273 residues: Probable branched-chain-amino-acid aminotransferase (273 aa).

Residue Lys-133 is modified to N6-(pyridoxal phosphate)lysine.

Belongs to the class-IV pyridoxal-phosphate-dependent aminotransferase family. Pyridoxal 5'-phosphate is required as a cofactor.

It carries out the reaction L-leucine + 2-oxoglutarate = 4-methyl-2-oxopentanoate + L-glutamate. The catalysed reaction is L-isoleucine + 2-oxoglutarate = (S)-3-methyl-2-oxopentanoate + L-glutamate. The enzyme catalyses L-valine + 2-oxoglutarate = 3-methyl-2-oxobutanoate + L-glutamate. It participates in amino-acid biosynthesis; L-isoleucine biosynthesis; L-isoleucine from 2-oxobutanoate: step 4/4. Its pathway is amino-acid biosynthesis; L-leucine biosynthesis; L-leucine from 3-methyl-2-oxobutanoate: step 4/4. It functions in the pathway amino-acid biosynthesis; L-valine biosynthesis; L-valine from pyruvate: step 4/4. In terms of biological role, acts on leucine, isoleucine and valine. This Thermotoga maritima (strain ATCC 43589 / DSM 3109 / JCM 10099 / NBRC 100826 / MSB8) protein is Probable branched-chain-amino-acid aminotransferase (ilvE).